A 281-amino-acid chain; its full sequence is Radiation response metalloprotease IrrE (281 aa).

His82 serves as a coordination point for Zn(2+). Glu83 is an active-site residue. His86 and Glu113 together coordinate Zn(2+). The tract at residues 262–281 (LPAGRSEPDADKPEAPGDQS) is disordered. A compositionally biased stretch (basic and acidic residues) spans 267-281 (SEPDADKPEAPGDQS).

As to quaternary structure, interacts with DdrOC.

With respect to regulation, protease activity is inhibited by EDTA. Its function is as follows. Plays a central regulatory role in DNA repair and protection pathways in response to radiation stress. Acts as a site-specific metalloprotease that cleaves and inactivates the repressor proteins DdrOC and DdrOP3, resulting in induced expression of genes required for DNA repair and cell survival after exposure to radiation. The polypeptide is Radiation response metalloprotease IrrE (Deinococcus deserti (strain DSM 17065 / CIP 109153 / LMG 22923 / VCD115)).